An 814-amino-acid chain; its full sequence is Microbial collagenase (814 aa).

Residues 1–21 (MELKILSVAIATTLTSTGVFA) form the signal peptide. Residues 22-75 (LSEPVSQVTEQHAHSAHTHGVEFNRVEYQPTATLPIQPSKATRVQSLESLDESS) constitute a propeptide that is removed on maturation. His-477 contributes to the Zn(2+) binding site. Residue Glu-478 is part of the active site. His-481 provides a ligand contact to Zn(2+). The 89-residue stretch at 609 to 697 (APNAVITANS…VVISALGGND (89 aa)) folds into the PKD domain.

It belongs to the peptidase M9A family. Requires Zn(2+) as cofactor. In terms of processing, proteolytic cleavage might yield three different active forms.

It localises to the secreted. The enzyme catalyses Digestion of native collagen in the triple helical region at Xaa-|-Gly bonds. With synthetic peptides, a preference is shown for Gly at P3 and P1', Pro and Ala at P2 and P2', and hydroxyproline, Ala or Arg at P3'.. This chain is Microbial collagenase, found in Vibrio alginolyticus.